The primary structure comprises 112 residues: Cell cycle protein GpsB (112 aa).

The stretch at 38 to 72 (IKDYEAFHKEFEQLKQQNARLKRELEEQKLVATQV) forms a coiled coil.

Belongs to the GpsB family. Forms polymers through the coiled coil domains. Interacts with PBP1, MreC and EzrA.

It is found in the cytoplasm. Functionally, divisome component that associates with the complex late in its assembly, after the Z-ring is formed, and is dependent on DivIC and PBP2B for its recruitment to the divisome. Together with EzrA, is a key component of the system that regulates PBP1 localization during cell cycle progression. Its main role could be the removal of PBP1 from the cell pole after pole maturation is completed. Also contributes to the recruitment of PBP1 to the division complex. Not essential for septum formation. This Bacillus cereus (strain ZK / E33L) protein is Cell cycle protein GpsB.